Here is a 411-residue protein sequence, read N- to C-terminus: Proline-responsive transcriptional activator PutR (411 aa).

The protein belongs to the CdaR family.

Activates transcription of the putBCP operon. Requires proline as a coactivator. The chain is Proline-responsive transcriptional activator PutR from Bacillus subtilis (strain 168).